The sequence spans 632 residues: Eukaryotic peptide chain release factor GTP-binding subunit ERF3B (632 aa).

Disordered stretches follow at residues 1–31 (MDLG…GDGI) and 162–200 (SEAK…SIPS). Positions 178 to 192 (ESVKEVMEEKEEVRK) are enriched in basic and acidic residues. A tr-type G domain is found at 205–429 (KEHVNVVFIG…YLDSLPNFNR (225 aa)). The interval 214–221 (GHVDAGKS) is G1. 217-222 (DAGKST) is a GTP binding site. Positions 270–274 (GKTVE) are G2. The G3 stretch occupies residues 291–294 (DAPG). GTP-binding positions include 353–356 (NKMD) and 395–397 (SGL). Positions 353-356 (NKMD) are G4. The segment at 395-397 (SGL) is G5.

This sequence belongs to the TRAFAC class translation factor GTPase superfamily. Classic translation factor GTPase family. ERF3 subfamily. As to quaternary structure, component of the eRF1-eRF3-GTP ternary complex, composed of ETF1/ERF1 and ERF3 (GSPT1/ERF3A or GSPT2/ERF3B) and GTP. Component of the transient SURF (SMG1-UPF1-eRF1-eRF3) complex. Interacts with UPF1 and PABPC1. Highly expressed in brain. Moderately expressed in spleen and lung. Weakly expressed in heart, liver and kidney. Expression during the cell-cycle progression is constant.

The protein resides in the cytoplasm. It catalyses the reaction GTP + H2O = GDP + phosphate + H(+). GTPase component of the eRF1-eRF3-GTP ternary complex, a ternary complex that mediates translation termination in response to the termination codons UAA, UAG and UGA. GSPT2/ERF3B mediates ETF1/ERF1 delivery to stop codons: The eRF1-eRF3-GTP complex binds to a stop codon in the ribosomal A-site. GTP hydrolysis by GSPT2/ERF3B induces a conformational change that leads to its dissociation, permitting ETF1/ERF1 to accommodate fully in the A-site. Component of the transient SURF complex which recruits UPF1 to stalled ribosomes in the context of nonsense-mediated decay (NMD) of mRNAs containing premature stop codons. The polypeptide is Eukaryotic peptide chain release factor GTP-binding subunit ERF3B (Gspt2) (Mus musculus (Mouse)).